The chain runs to 139 residues: Superoxide dismutase [Cu-Zn] (139 aa).

A lipid anchor (S-palmitoyl cysteine) is attached at C6. H47 and H49 together coordinate Cu cation. H72, H81, and D84 together coordinate Zn(2+). H114 serves as a coordination point for Cu cation. Over residues D118–L129 the composition is skewed to basic and acidic residues. Residues D118–A139 are disordered.

It belongs to the Cu-Zn superoxide dismutase family. In terms of assembly, homodimer. Cu cation serves as cofactor. The cofactor is Zn(2+).

The protein localises to the cytoplasm. Its subcellular location is the nucleus. The enzyme catalyses 2 superoxide + 2 H(+) = H2O2 + O2. In terms of biological role, destroys radicals which are normally produced within the cells and which are toxic to biological systems. This is Superoxide dismutase [Cu-Zn] (sod1) from Lampanyctus crocodilus (Jewel lanternfish).